A 179-amino-acid chain; its full sequence is MSRLYLYYKNKVIPNLIKKFNYSSIMAVPQIIKITLNMGIGKSIINKKILDYAIDDLTKISGQKPIITIAKKSIASFKIRKGYPIGCKVTLRGRRKWDFFDKLITIVIPRIRDFRGMSRKSFDGRGNYSLGIREQIIFPEINYEKIDSIRGMDITITTNSKSNQEGECLLTEFDFPFQK.

This sequence belongs to the universal ribosomal protein uL5 family. As to quaternary structure, part of the 50S ribosomal subunit; part of the 5S rRNA/L5/L18/L25 subcomplex. Contacts the 5S rRNA and the P site tRNA. Forms a bridge to the 30S subunit in the 70S ribosome.

In terms of biological role, this is one of the proteins that bind and probably mediate the attachment of the 5S RNA into the large ribosomal subunit, where it forms part of the central protuberance. In the 70S ribosome it contacts protein S13 of the 30S subunit (bridge B1b), connecting the 2 subunits; this bridge is implicated in subunit movement. Contacts the P site tRNA; the 5S rRNA and some of its associated proteins might help stabilize positioning of ribosome-bound tRNAs. This chain is Large ribosomal subunit protein uL5, found in Buchnera aphidicola subsp. Cinara cedri (strain Cc).